The following is a 420-amino-acid chain: Glucose-1-phosphate adenylyltransferase (420 aa).

Residues Y107, G173, 188 to 189 (EK), and S206 contribute to the alpha-D-glucose 1-phosphate site.

The protein belongs to the bacterial/plant glucose-1-phosphate adenylyltransferase family. Homotetramer.

The catalysed reaction is alpha-D-glucose 1-phosphate + ATP + H(+) = ADP-alpha-D-glucose + diphosphate. The protein operates within glycan biosynthesis; glycogen biosynthesis. In terms of biological role, involved in the biosynthesis of ADP-glucose, a building block required for the elongation reactions to produce glycogen. Catalyzes the reaction between ATP and alpha-D-glucose 1-phosphate (G1P) to produce pyrophosphate and ADP-Glc. This chain is Glucose-1-phosphate adenylyltransferase, found in Shewanella sp. (strain W3-18-1).